The following is an 85-amino-acid chain: Probable oxaloacetate decarboxylase gamma chain (85 aa).

A helical transmembrane segment spans residues Ala11–Val33.

The protein belongs to the OadG family. In terms of assembly, heterotrimer of an alpha, a beta and a gamma subunit. It depends on Na(+) as a cofactor.

It localises to the cell membrane. The enzyme catalyses oxaloacetate + 2 Na(+)(in) + H(+) = pyruvate + 2 Na(+)(out) + CO2. Functionally, catalyzes the decarboxylation of oxaloacetate coupled to Na(+) translocation. This is Probable oxaloacetate decarboxylase gamma chain from Vibrio parahaemolyticus serotype O3:K6 (strain RIMD 2210633).